The sequence spans 399 residues: uncharacterized protein (399 aa).

Positions 254-335 are disordered; sequence SRVSTGDTSP…FFRDSDDDGD (82 aa). Positions 255-264 are enriched in polar residues; that stretch reads RVSTGDTSPY. Over residues 310–329 the composition is skewed to basic and acidic residues; sequence RNAEMKKSHSANDSEEFFRD.

This is an uncharacterized protein from Xenopus laevis (African clawed frog).